Reading from the N-terminus, the 92-residue chain is Small ribosomal subunit protein bS20 (92 aa).

This sequence belongs to the bacterial ribosomal protein bS20 family.

Binds directly to 16S ribosomal RNA. The protein is Small ribosomal subunit protein bS20 of Rickettsia conorii (strain ATCC VR-613 / Malish 7).